Reading from the N-terminus, the 602-residue chain is DNA mismatch repair protein MutL (602 aa).

This sequence belongs to the DNA mismatch repair MutL/HexB family.

In terms of biological role, this protein is involved in the repair of mismatches in DNA. It is required for dam-dependent methyl-directed DNA mismatch repair. May act as a 'molecular matchmaker', a protein that promotes the formation of a stable complex between two or more DNA-binding proteins in an ATP-dependent manner without itself being part of a final effector complex. The chain is DNA mismatch repair protein MutL from Geotalea uraniireducens (strain Rf4) (Geobacter uraniireducens).